The following is a 916-amino-acid chain: Extracellular signal-regulated kinase 7 (916 aa).

In terms of domain architecture, Protein kinase spans 25–319; it reads FDVRKRMGKG…AKEAIRHPYV (295 aa). Residues 31–39 and K54 each bind ATP; that span reads MGKGAYGIV. The Proton acceptor role is filled by D149. 2 stretches are compositionally biased toward polar residues: residues 364–376 and 390–403; these read CSNR…TPSS and QART…TTSP. Disordered regions lie at residues 364–419, 452–477, 588–608, 711–742, 792–813, and 883–916; these read CSNR…TQSR, PPAA…KSVP, PSET…QMKR, KKLQ…SQNY, ELNP…PGRD, and CRHR…PESN. 3 stretches are compositionally biased toward basic and acidic residues: residues 590 to 608, 715 to 730, and 800 to 811; these read ETEH…QMKR, RSKE…RRAL, and GGRDSGSEHSPG. Residues 883–892 show a composition bias toward basic residues; the sequence is CRHRHHKPNH. Residues 894 to 903 are compositionally biased toward basic and acidic residues; sequence APYDHMRPTE.

This sequence belongs to the protein kinase superfamily. Ser/Thr protein kinase family.

The enzyme catalyses L-seryl-[protein] + ATP = O-phospho-L-seryl-[protein] + ADP + H(+). The catalysed reaction is L-threonyl-[protein] + ATP = O-phospho-L-threonyl-[protein] + ADP + H(+). Functionally, atypical MAPK protein that regulates protein secretion in a kinase activity-dependent manner. In response to starvation regulates protein secretion by mediating transitional endoplasmic reticulum site disassembly. Mediates inhibition of insulin-like peptide secretion upon disturbed ribosome biogenesis and acts as a downstream effector of TP53. The sequence is that of Extracellular signal-regulated kinase 7 from Drosophila melanogaster (Fruit fly).